A 443-amino-acid chain; its full sequence is 3-phosphoshikimate 1-carboxyvinyltransferase (443 aa).

Residues Lys-25, Ser-26, and Arg-30 each contribute to the 3-phosphoshikimate site. Lys-25 is a phosphoenolpyruvate binding site. Phosphoenolpyruvate contacts are provided by Gly-117 and Arg-145. 3-phosphoshikimate-binding residues include Ser-188, Ser-189, Gln-190, Ser-217, Glu-331, and His-358. A phosphoenolpyruvate-binding site is contributed by Gln-190. Residue Glu-331 is the Proton acceptor of the active site. Phosphoenolpyruvate-binding residues include Arg-362, Arg-404, and Lys-428.

Belongs to the EPSP synthase family. As to quaternary structure, monomer.

It localises to the cytoplasm. It catalyses the reaction 3-phosphoshikimate + phosphoenolpyruvate = 5-O-(1-carboxyvinyl)-3-phosphoshikimate + phosphate. It participates in metabolic intermediate biosynthesis; chorismate biosynthesis; chorismate from D-erythrose 4-phosphate and phosphoenolpyruvate: step 6/7. Catalyzes the transfer of the enolpyruvyl moiety of phosphoenolpyruvate (PEP) to the 5-hydroxyl of shikimate-3-phosphate (S3P) to produce enolpyruvyl shikimate-3-phosphate and inorganic phosphate. The sequence is that of 3-phosphoshikimate 1-carboxyvinyltransferase from Tropheryma whipplei (strain TW08/27) (Whipple's bacillus).